The following is a 344-amino-acid chain: Ferrochelatase (344 aa).

The Fe cation site is built by H214 and E295.

Belongs to the ferrochelatase family.

The protein resides in the cytoplasm. The enzyme catalyses heme b + 2 H(+) = protoporphyrin IX + Fe(2+). It participates in porphyrin-containing compound metabolism; protoheme biosynthesis; protoheme from protoporphyrin-IX: step 1/1. Catalyzes the ferrous insertion into protoporphyrin IX. The polypeptide is Ferrochelatase (Agrobacterium fabrum (strain C58 / ATCC 33970) (Agrobacterium tumefaciens (strain C58))).